The following is an 864-amino-acid chain: Probable M1 family aminopeptidase 2 (864 aa).

Substrate contacts are provided by residues E149 and 289-293 (GAMEN). H325 is a Zn(2+) binding site. The Proton acceptor role is filled by E326. The Zn(2+) site is built by H329 and E348.

It belongs to the peptidase M1 family. It depends on Zn(2+) as a cofactor.

The protein is Probable M1 family aminopeptidase 2 of Encephalitozoon cuniculi (strain GB-M1) (Microsporidian parasite).